Reading from the N-terminus, the 402-residue chain is FMN-dependent alpha-hydroxy acid dehydrogenase qulF (402 aa).

One can recognise an FMN hydroxy acid dehydrogenase domain in the interval 22–394 (RLPAITTNPT…NRDCMRRISY (373 aa)). Tyrosine 48 contacts a 2-oxocarboxylate. FMN contacts are provided by serine 130 and glutamine 152. 2 residues coordinate a 2-oxocarboxylate: tyrosine 154 and arginine 189. Lysine 265 lines the FMN pocket. Histidine 289 (proton acceptor) is an active-site residue. An a 2-oxocarboxylate-binding site is contributed by arginine 292. FMN is bound by residues 320-324 (DSGVR) and 343-344 (GR).

This sequence belongs to the FMN-dependent alpha-hydroxy acid dehydrogenase family. It depends on FMN as a cofactor.

Functionally, FMN-dependent alpha-hydroxy acid dehydrogenase; part of the gene cluster that mediates the biosynthesis of quinolactacin A2 (QUL A2), a fungal alkaloid that features a quinolone-gamma-lactam hybrid, which is a potential pharmacophore for the treatment of cancer and Alzheimer's disease. The quinolone-gamma-lactam hybrid scaffold is synthesized from the combination of L-isoleucine (L-Ile) and the nonproteinogenic amino acid L-kynurenine, followed by quinolone cyclization, oxidative decarboxylation, and lactam formation. Additionally, the N-methyl group is derived from methionine, which might be catalyzed by an S-adenosylmethionine (SAM)-dependent methyltransferase. Bioconversion of L-tryptophan to L-kynurenine could be catalyzed by the indoleamine-2,3-dioxygenase (IDO) qulI to produce an unstable product, N-formyl-L-kynurenine, followed by kynurenine formamidase catalyzed hydrolysis. QulM then acts as a methyltransferase that methylates L-kynurenine at the N-4 position. The FMN-dependent alpha-hydroxy acid dehydrogenase qulF than functions as an oxidative decarboxylase which converts N-methylkynurenine into 2-aminobenzoylacetamide via 2 tandem reactions, including dehydrogenation and decarboxylation. An amidase located outside of the qul gene cluster further produces the unstable beta-keto acid precursor N-methyl-2-aminobenzoylacetate, which could be spontaneously dehydrated to form N-methyl-4-hydroxy-2-quinolone. The NRPS qulB is able to incorporate N-methyl-2-aminobenzoylacetate and efficiently compete with the spontaneous reaction. By further extending the beta-keto acid with L-Ile, qulA performs a Dieckmann condensation to form the gamma-lactam ring and release a 4-ketopyrrolidinone intermediate from the assembly line. This intermediate could plausibly further undergo a spontaneous cyclization to yield the final quinolone-gamma-lactam hybrid structure. The sequence is that of FMN-dependent alpha-hydroxy acid dehydrogenase qulF from Penicillium citrinum.